Here is a 371-residue protein sequence, read N- to C-terminus: RNA polymerase sigma factor SigA (371 aa).

Positions 137 to 207 are sigma-70 factor domain-2; that stretch reads LAEANLRLVV…TRAIADQART (71 aa). An Interaction with polymerase core subunit RpoC motif is present at residues 161 to 164; sequence DLIQ. The interval 216–292 is sigma-70 factor domain-3; it reads ETINKLVREQ…DEVIENPVDY (77 aa). The interval 305-358 is sigma-70 factor domain-4; it reads VLDTLTDREENVLRLRFGLDDGKMRTLEDVGKVFDVTRERIRQIEAKALRKLRH. Positions 331 to 350 form a DNA-binding region, H-T-H motif; that stretch reads LEDVGKVFDVTRERIRQIEA.

The protein belongs to the sigma-70 factor family. RpoD/SigA subfamily. In terms of assembly, interacts transiently with the RNA polymerase catalytic core.

It localises to the cytoplasm. Functionally, sigma factors are initiation factors that promote the attachment of RNA polymerase to specific initiation sites and are then released. This sigma factor is the primary sigma factor during exponential growth. The chain is RNA polymerase sigma factor SigA from Streptococcus mutans serotype c (strain ATCC 700610 / UA159).